Consider the following 256-residue polypeptide: Probable enoyl-CoA hydratase echA14 (256 aa).

Residues 235 to 256 (GPQAKSVQSPEFAARLAAAQHR) are disordered.

Belongs to the enoyl-CoA hydratase/isomerase family.

The enzyme catalyses a (3S)-3-hydroxyacyl-CoA = a (2E)-enoyl-CoA + H2O. It catalyses the reaction a 4-saturated-(3S)-3-hydroxyacyl-CoA = a (3E)-enoyl-CoA + H2O. In terms of biological role, could possibly oxidize fatty acids using specific components. In Mycobacterium tuberculosis (strain CDC 1551 / Oshkosh), this protein is Probable enoyl-CoA hydratase echA14 (echA14).